The primary structure comprises 96 residues: Co-chaperonin GroES (96 aa).

The protein belongs to the GroES chaperonin family. As to quaternary structure, heptamer of 7 subunits arranged in a ring. Interacts with the chaperonin GroEL.

It localises to the cytoplasm. Together with the chaperonin GroEL, plays an essential role in assisting protein folding. The GroEL-GroES system forms a nano-cage that allows encapsulation of the non-native substrate proteins and provides a physical environment optimized to promote and accelerate protein folding. GroES binds to the apical surface of the GroEL ring, thereby capping the opening of the GroEL channel. This chain is Co-chaperonin GroES, found in Polaromonas sp. (strain JS666 / ATCC BAA-500).